Reading from the N-terminus, the 242-residue chain is tRNA (guanine-N(7)-)-methyltransferase (242 aa).

S-adenosyl-L-methionine contacts are provided by glutamate 66, glutamate 91, aspartate 118, and aspartate 141. Aspartate 141 is an active-site residue. Substrate is bound by residues lysine 145, aspartate 177, and 214–217; that span reads TKFE.

The protein belongs to the class I-like SAM-binding methyltransferase superfamily. TrmB family. In terms of assembly, monomer.

The catalysed reaction is guanosine(46) in tRNA + S-adenosyl-L-methionine = N(7)-methylguanosine(46) in tRNA + S-adenosyl-L-homocysteine. It participates in tRNA modification; N(7)-methylguanine-tRNA biosynthesis. Its function is as follows. Catalyzes the formation of N(7)-methylguanine at position 46 (m7G46) in tRNA. The sequence is that of tRNA (guanine-N(7)-)-methyltransferase from Buchnera aphidicola subsp. Baizongia pistaciae (strain Bp).